A 159-amino-acid polypeptide reads, in one-letter code: Endoribonuclease YbeY (159 aa).

Positions 125, 129, and 135 each coordinate Zn(2+).

This sequence belongs to the endoribonuclease YbeY family. Zn(2+) is required as a cofactor.

The protein localises to the cytoplasm. Single strand-specific metallo-endoribonuclease involved in late-stage 70S ribosome quality control and in maturation of the 3' terminus of the 16S rRNA. This Enterococcus faecalis (strain ATCC 700802 / V583) protein is Endoribonuclease YbeY.